The sequence spans 191 residues: Hypoxanthine/guanine phosphoribosyltransferase (191 aa).

Belongs to the purine/pyrimidine phosphoribosyltransferase family. Archaeal HPRT subfamily. As to quaternary structure, homodimer.

It is found in the cytoplasm. The catalysed reaction is IMP + diphosphate = hypoxanthine + 5-phospho-alpha-D-ribose 1-diphosphate. The enzyme catalyses GMP + diphosphate = guanine + 5-phospho-alpha-D-ribose 1-diphosphate. It participates in purine metabolism; IMP biosynthesis via salvage pathway; IMP from hypoxanthine: step 1/1. Its function is as follows. Catalyzes a salvage reaction resulting in the formation of IMP that is energically less costly than de novo synthesis. This is Hypoxanthine/guanine phosphoribosyltransferase from Methanocella arvoryzae (strain DSM 22066 / NBRC 105507 / MRE50).